Consider the following 149-residue polypeptide: Calmodulin (149 aa).

Alanine 2 is modified (N-acetylalanine). EF-hand domains follow at residues 8–43 (EQIA…LGQN), 44–79 (PTEA…KMKD), 81–116 (DTEE…LGEK), and 117–149 (LTDE…MMAK). 14 residues coordinate Ca(2+): aspartate 21, aspartate 23, aspartate 25, threonine 27, glutamate 32, aspartate 57, aspartate 59, asparagine 61, threonine 63, glutamate 68, aspartate 94, aspartate 96, asparagine 98, and glutamate 105. An N6,N6,N6-trimethyllysine modification is found at lysine 116. Ca(2+) is bound by residues aspartate 130, aspartate 132, aspartate 134, glutamine 136, and glutamate 141.

The protein belongs to the calmodulin family.

Calmodulin mediates the control of a large number of enzymes, ion channels and other proteins by Ca(2+). Among the enzymes to be stimulated by the calmodulin-Ca(2+) complex are a number of protein kinases and phosphatases. The sequence is that of Calmodulin from Karlodinium veneficum (Dinoflagellate).